Reading from the N-terminus, the 302-residue chain is Pseudouridine-5'-phosphate glycosidase (302 aa).

Catalysis depends on Glu25, which acts as the Proton donor. Substrate-binding residues include Lys86 and Val106. Residue Asp138 coordinates Mn(2+). 140 to 142 (SAD) is a substrate binding site. Lys159 functions as the Nucleophile in the catalytic mechanism.

It belongs to the pseudouridine-5'-phosphate glycosidase family. As to quaternary structure, homotrimer. Requires Mn(2+) as cofactor.

It catalyses the reaction D-ribose 5-phosphate + uracil = psi-UMP + H2O. Its function is as follows. Catalyzes the reversible cleavage of pseudouridine 5'-phosphate (PsiMP) to ribose 5-phosphate and uracil. Functions biologically in the cleavage direction, as part of a pseudouridine degradation pathway. This Glaesserella parasuis serovar 5 (strain SH0165) (Haemophilus parasuis) protein is Pseudouridine-5'-phosphate glycosidase.